Reading from the N-terminus, the 201-residue chain is Histidinol dehydrogenase (201 aa).

Belongs to the histidinol dehydrogenase family. As to quaternary structure, homodimer. Zn(2+) is required as a cofactor.

The catalysed reaction is L-histidinol + 2 NAD(+) + H2O = L-histidine + 2 NADH + 3 H(+). Its pathway is amino-acid biosynthesis; L-histidine biosynthesis; L-histidine from 5-phospho-alpha-D-ribose 1-diphosphate: step 9/9. Catalyzes the sequential NAD-dependent oxidations of L-histidinol to L-histidinaldehyde and then to L-histidine. In Buchnera aphidicola subsp. Melaphis rhois, this protein is Histidinol dehydrogenase (hisD).